The sequence spans 310 residues: Protein translocase subunit SecF (310 aa).

6 consecutive transmembrane segments (helical) span residues 20–42 (FKKVSYTFSIILSLISVISIGIY), 140–160 (IEAGTMAMLFSFLAIMVYIWV), 164–184 (WYFGLGILIALMHDLILALGF), 194–214 (LSTIAAVLTIIGYSVNDSVVI), 246–266 (ILTVITTLLANLALILFGGEA), and 272–292 (VLVFFGIIAGTYSSIFISAPI).

The protein belongs to the SecD/SecF family. SecF subfamily. Forms a complex with SecD. Part of the essential Sec protein translocation apparatus which comprises SecA, SecYEG and auxiliary proteins SecDF-YajC and YidC.

It localises to the cell inner membrane. Part of the Sec protein translocase complex. Interacts with the SecYEG preprotein conducting channel. SecDF uses the proton motive force (PMF) to complete protein translocation after the ATP-dependent function of SecA. The protein is Protein translocase subunit SecF of Rickettsia canadensis (strain McKiel).